The following is a 364-amino-acid chain: Methylthioribose-1-phosphate isomerase (364 aa).

Residues 49-51, arginine 89, and glutamine 201 each bind substrate; that span reads RGA. Aspartate 242 (proton donor) is an active-site residue. Residue 252–253 participates in substrate binding; the sequence is NK.

It belongs to the eIF-2B alpha/beta/delta subunits family. MtnA subfamily.

The catalysed reaction is 5-(methylsulfanyl)-alpha-D-ribose 1-phosphate = 5-(methylsulfanyl)-D-ribulose 1-phosphate. The protein operates within amino-acid biosynthesis; L-methionine biosynthesis via salvage pathway; L-methionine from S-methyl-5-thio-alpha-D-ribose 1-phosphate: step 1/6. Catalyzes the interconversion of methylthioribose-1-phosphate (MTR-1-P) into methylthioribulose-1-phosphate (MTRu-1-P). The sequence is that of Methylthioribose-1-phosphate isomerase from Leptospira interrogans serogroup Icterohaemorrhagiae serovar Lai (strain 56601).